We begin with the raw amino-acid sequence, 419 residues long: D-inositol 3-phosphate glycosyltransferase (419 aa).

Position 9 (H9) interacts with 1D-myo-inositol 3-phosphate. UDP-N-acetyl-alpha-D-glucosamine contacts are provided by residues 15 to 16 (QP) and G23. 1D-myo-inositol 3-phosphate-binding positions include 20-25 (DAGGMN), K78, Y110, T134, and R154. UDP-N-acetyl-alpha-D-glucosamine-binding residues include R231, K236, and R295. Residues Y304, R305, and A307 each contribute to the Mg(2+) site. The UDP-N-acetyl-alpha-D-glucosamine site is built by E317 and E325. T331 contacts Mg(2+).

It belongs to the glycosyltransferase group 1 family. MshA subfamily. In terms of assembly, homodimer.

It catalyses the reaction 1D-myo-inositol 3-phosphate + UDP-N-acetyl-alpha-D-glucosamine = 1D-myo-inositol 2-acetamido-2-deoxy-alpha-D-glucopyranoside 3-phosphate + UDP + H(+). Functionally, catalyzes the transfer of a N-acetyl-glucosamine moiety to 1D-myo-inositol 3-phosphate to produce 1D-myo-inositol 2-acetamido-2-deoxy-glucopyranoside 3-phosphate in the mycothiol biosynthesis pathway. This Corynebacterium jeikeium (strain K411) protein is D-inositol 3-phosphate glycosyltransferase.